Consider the following 355-residue polypeptide: F-box only protein 32 (355 aa).

The Nuclear localization signal signature appears at 62–67 (KKRKKD). The short motif at 169-173 (LLQTL) is the Nuclear export signal element. Residues 223–271 (LTFTDLPLCLQLNIMQRLSDGRDLVSLGQVAPDLHVLSEDRLLWKKLCQ) enclose the F-box domain. The Bipartite nuclear localization signal signature appears at 280 to 295 (RKRLILSDKGQLDWKK).

In terms of assembly, part of the SCF (SKP1-CUL1-F-box) E3 ubiquitin-protein ligase complex SCF(FBXO32) formed of CUL1, SKP1, RBX1 and FBXO32.

It localises to the cytoplasm. The protein resides in the nucleus. It participates in protein modification; protein ubiquitination. Substrate recognition component of a SCF (SKP1-CUL1-F-box protein) E3 ubiquitin-protein ligase complex which mediates the ubiquitination and subsequent proteasomal degradation of target proteins. Probably recognizes and binds to phosphorylated target proteins during skeletal muscle atrophy. Recognizes TERF1. In Bos taurus (Bovine), this protein is F-box only protein 32 (FBXO32).